The following is a 308-amino-acid chain: Eugenol synthase 1 (308 aa).

NADP(+) contacts are provided by residues 13–16 (TGYI), 35–45 (VRESTVSDPAK), R36, 86–88 (QMQ), 111–113 (SEF), K133, and 153–155 (NCF). Catalysis depends on K133, which acts as the Proton donor/acceptor.

Belongs to the NmrA-type oxidoreductase family. As to expression, in flowers, mostly expressed in limbs, and, to a lower extent, in tubes.

The enzyme catalyses eugenol + a carboxylate + NADP(+) = a coniferyl ester + NADPH. The catalysed reaction is eugenol + acetate + NADP(+) = (E)-coniferyl acetate + NADPH. It participates in aromatic compound metabolism; phenylpropanoid biosynthesis. Its function is as follows. Involved in the biosynthesis of the floral volatile eugenol. Catalyzes the synthesis of the phenylpropene eugenol from coniferyl acetate. Phenylpropenes are produced by plants as defense compounds with antimicrobial and antianimal properties, or as floral attractants of pollinators. In Petunia hybrida (Petunia), this protein is Eugenol synthase 1.